A 116-amino-acid polypeptide reads, in one-letter code: PTS system cellobiose-specific EIIA component (116 aa).

The 99-residue stretch at 11–109 (DDYMGVVMGI…AVEVVGQEQR (99 aa)) folds into the PTS EIIA type-3 domain. Catalysis depends on His-85, which acts as the Tele-phosphohistidine intermediate. His-85 carries the post-translational modification Phosphohistidine; by HPr. Residue Asp-88 coordinates Mg(2+).

As to quaternary structure, homotrimer. The cofactor is Mg(2+).

In terms of biological role, the phosphoenolpyruvate-dependent sugar phosphotransferase system (sugar PTS), a major carbohydrate active transport system, catalyzes the phosphorylation of incoming sugar substrates concomitantly with their translocation across the cell membrane. Involved in cellobiose transport with PtcB and CelB. This system can also transport lactose. The chain is PTS system cellobiose-specific EIIA component from Lactococcus lactis subsp. lactis (strain IL1403) (Streptococcus lactis).